The primary structure comprises 159 residues: Small ribosomal subunit protein uS7 (159 aa).

This sequence belongs to the universal ribosomal protein uS7 family. As to quaternary structure, part of the 30S ribosomal subunit. Contacts proteins S9 and S11.

One of the primary rRNA binding proteins, it binds directly to 16S rRNA where it nucleates assembly of the head domain of the 30S subunit. Is located at the subunit interface close to the decoding center, probably blocks exit of the E-site tRNA. In Endomicrobium trichonymphae, this protein is Small ribosomal subunit protein uS7.